The chain runs to 1231 residues: MAAALGAGGGAGAGDDDFDQFDKPGAERSWRRRAADEDWDSELEDDLLGEDLLSGKKNQSDLSDEELNDDLLQSDNEEEENFSSQGVTISLNTTSGIVTSFELSDNTNDQSGEQESEYEQGDDELAYHKPEEQELYTQEYPEEGQYEGHDAELTEDQIEYGDEPEEEQLYSDEVLDIEINEPLDEFTDEEYLQAYGGQQGLQVREDCEAEDDLDEITDSQVASETHEGGMETLELQKDIKEESDEEDDDDEESGRLRFKTERKEGTIIRLSDVTRERRNIPETLELSAEAKAALLEFEERERQHKQGRYGSRRGGRRGGSLMCRGMGDQRRDNSERGRMKEHRPALLPTQPSVVAHSPRLIPPPQPQPPPPPPPPPPQQQPIRSLFQQQQLQPLLPLQHPHHPSPPQGVHMPPQIETPRMMLTPPPVTPQQPKNIHINPHFKGTVVTPVQVPLLPVPSQPRPAVGPQRFPGPPEFPQHTPGPVPNSFNQPPRLPLQDQWRAPPPPQERDPFFLGVSGEPRFPSHLFLEQRSPPPPPPPPTLLNSSHPVPTQSPLPFTQPGPAFNQQGQQPVFPRERPVRPALQPPGPVGILHFSQPGSATARPFIPPRQPFLPSPGQPFLPTHAQPNLQGPLHPPLPPPHQPQPQPQQPQQQPQHHQHQPPLQPPLQPPHQPPPQHQPPPQHQPQQHQHHHHLSAPPPPLMPMSQPQFRPHVQTAQPQPSSSRMQCTPHQGLRHNAASQNISKRPMQQMQPTAPRNSNLRELPIAPSHVLEMSGNRCSSTPVAQVKSIVNTSPPCRAVVSSRSSQGNTDAKAKPLSPEAQPKEEAKPEAEFPDEDEETRLYRLKIEEQKRLREEILKQKELRRQQQAGARKKELLERLAQQQQQQQQQQHQPQQQQQQPQQIYGSQTSMEQEELAATPSPTNGNPLLPFPGAQCRQNVKTRLLVKNQDITTASVQPKAVNFVPPGANVQHQGQHLRPLKHLRQLPHKVLQVKPMDMEETPHSPQAARVTSLQGRPQDTKPGVKRTVMHRANSGGGGDGPHVSSKVRVIKLSGGQGGESDGFSHTEGQPQRLPQPPDMRQQPTRKVTLTKGVPQQPQHLPVGPHMYPAIPPGIKSIQGIHPAKKAIMHGRGRGVAGPMGRGRLMPNKQNLRVVECKPQPCVVSVEGLSSSTTDVQLKSLLMSVGPIQSLQMLPQQRKAIAKFKEPAHALAFQQKFHRHMIDLSHINVALIVE.

The span at 1–13 (MAAALGAGGGAGA) shows a compositional bias: gly residues. Disordered stretches follow at residues 1-168 (MAAA…EEEQ) and 219-261 (SQVA…FKTE). Residue alanine 2 is modified to N-acetylalanine. A compositionally biased stretch (basic and acidic residues) spans 20-36 (QFDKPGAERSWRRRAAD). The segment covering 37–49 (EDWDSELEDDLLG) has biased composition (acidic residues). Serine 41 is modified (phosphoserine). Polar residues predominate over residues 82-108 (FSSQGVTISLNTTSGIVTSFELSDNTN). Composition is skewed to acidic residues over residues 112 to 124 (GEQE…GDDE) and 153 to 168 (LTED…EEEQ). The segment covering 224–240 (ETHEGGMETLELQKDIK) has biased composition (basic and acidic residues). Acidic residues predominate over residues 241 to 252 (EESDEEDDDDEE). Phosphoserine occurs at positions 243 and 271. 2 disordered regions span residues 297–436 (FEER…KNIH) and 452–761 (PLLP…NLRE). Over residues 305–316 (KQGRYGSRRGGR) the composition is skewed to basic residues. Positions 327–344 (GDQRRDNSERGRMKEHRP) are enriched in basic and acidic residues. Residues 360 to 379 (LIPPPQPQPPPPPPPPPPQQ) are compositionally biased toward pro residues. Low complexity predominate over residues 380 to 398 (QPIRSLFQQQQLQPLLPLQ). A compositionally biased stretch (pro residues) spans 469-483 (FPGPPEFPQHTPGPV). An Asymmetric dimethylarginine modification is found at arginine 520. Composition is skewed to pro residues over residues 531-540 (SPPPPPPPPT), 604-618 (FIPP…PGQP), 632-647 (LHPP…PQPQ), and 661-682 (PLQP…PPQH). Composition is skewed to polar residues over residues 713–728 (QTAQ…QCTP) and 736–759 (AASQ…NSNL). Phosphoserine occurs at positions 792 and 816. Disordered regions lie at residues 796–840 (RAVV…ETRL), 876–932 (ERLA…FPGA), and 998–1080 (ETPH…MRQQ). Basic and acidic residues predominate over residues 820–829 (QPKEEAKPEA). Residues 840–891 (LYRLKIEEQKRLREEILKQKELRRQQQAGARKKELLERLAQQQQQQQQQQHQ) are a coiled coil. The span at 880–901 (QQQQQQQQQQHQPQQQQQQPQQ) shows a compositional bias: low complexity. 2 positions are modified to phosphoserine: serine 1002 and serine 1010. Lysine 1019 participates in a covalent cross-link: Glycyl lysine isopeptide (Lys-Gly) (interchain with G-Cter in SUMO2). Residues serine 1032 and serine 1051 each carry the phosphoserine modification.

In terms of assembly, associates with the NXF1-NXT1 RNA export complex. Interacts with ALKBH5; facilitating ALKBH5 recruitment to m6A-containing transcripts. Interacts with SENP1; promoting ALKBH5 deSUMOylation and subsequent activation.

It localises to the nucleus. Its subcellular location is the cytoplasm. RNA reader protein, which recognizes and binds specific RNAs, thereby regulating RNA metabolic processes, such as mRNA export, mRNA stability and/or translation. Binds a subset of intronless RNAs containing GC-rich elements, such as NORAD, and promotes their nuclear export by recruiting target RNAs to components of the NXF1-NXT1 RNA export machinery. Specifically recognizes and binds N6-methyladenosine (m6A)-containing mRNAs, promoting their demethylation by ALKBH5. Acts as an molecular adapter, which (1) promotes ALKBH5 recruitment to m6A-containing transcripts and (2) activates ALKBH5 demethylase activity by recruiting SENP1, leading to ALKBH5 deSUMOylation and subsequent activation. In Mus musculus (Mouse), this protein is RNA-binding protein 33.